The primary structure comprises 637 residues: Probable potassium transport system protein Kup 2 (637 aa).

The disordered stretch occupies residues 1 to 21; sequence MDLASRDSEAETVEQSSHSGA. The next 12 membrane-spanning stretches (helical) occupy residues 29-49, 68-88, 116-136, 150-170, 180-200, 228-248, 258-278, 300-320, 359-379, 381-401, 409-429, and 434-454; these read LMLGALGVVYGDIGTSPIYAF, VLSLIVWALTIIVTIKYVAFV, LILAIGLCGAALFFGDSIITP, VTPTLDPYVVPITLLILAILF, VAAVFGPVTALWFLAIGVAGL, AAFVTVGAVFLAVTGAEALYV, IVLAWFSVVFPCLLLNYFGQG, ALMPMVGLATAATVIASQAVI, LLVALGVMLLVVGFGSSSSLA, AYGISVTGEMLMTTILLFVVM, LAVALPLTLLFGIIDSGFFLA, and IFEGGWVSITVACLMGLIMWT.

This sequence belongs to the HAK/KUP transporter (TC 2.A.72) family.

The protein resides in the cell inner membrane. The catalysed reaction is K(+)(in) + H(+)(in) = K(+)(out) + H(+)(out). Its function is as follows. Transport of potassium into the cell. Likely operates as a K(+):H(+) symporter. This Mesorhizobium japonicum (strain LMG 29417 / CECT 9101 / MAFF 303099) (Mesorhizobium loti (strain MAFF 303099)) protein is Probable potassium transport system protein Kup 2.